A 148-amino-acid polypeptide reads, in one-letter code: MNASNPCRRFPRSARVRTRAQYTVVFDTARRTSDPLLSLHWRSGETPPRLGMAVSRKVDTRAVGRNRIKRVLRDAMRHLLPELAGGDYVIVARSAAAKATNPQIRDAFVRLLRRAGALPLPAAPGTMPPARAPRPSSLSPTEPDPRSD.

The disordered stretch occupies residues 119-148 (PLPAAPGTMPPARAPRPSSLSPTEPDPRSD).

Belongs to the RnpA family. In terms of assembly, consists of a catalytic RNA component (M1 or rnpB) and a protein subunit.

It carries out the reaction Endonucleolytic cleavage of RNA, removing 5'-extranucleotides from tRNA precursor.. Its function is as follows. RNaseP catalyzes the removal of the 5'-leader sequence from pre-tRNA to produce the mature 5'-terminus. It can also cleave other RNA substrates such as 4.5S RNA. The protein component plays an auxiliary but essential role in vivo by binding to the 5'-leader sequence and broadening the substrate specificity of the ribozyme. In Xanthomonas campestris pv. campestris (strain 8004), this protein is Ribonuclease P protein component.